The sequence spans 275 residues: Succinate dehydrogenase [ubiquinone] iron-sulfur subunit, mitochondrial (275 aa).

The transit peptide at 1–24 (MFSRRIQVLSPFLKHFVNRNARMM) directs the protein to the mitochondrion. Residues 57 to 137 (PEVKPKLQKY…PTKIYPLPHC (81 aa)) form the 2Fe-2S ferredoxin-type domain. The [2Fe-2S] cluster site is built by Cys-98, Cys-103, Cys-106, and Cys-118. The 4Fe-4S ferredoxin-type domain occupies 178-208 (DRAKLDGLYECILCACCSTSCPSYWWNSEEY). [4Fe-4S] cluster-binding residues include Cys-188, Cys-191, and Cys-194. Cys-198 serves as a coordination point for [3Fe-4S] cluster. Trp-203 serves as a coordination point for a ubiquinone. 2 residues coordinate [3Fe-4S] cluster: Cys-245 and Cys-251. Cys-255 serves as a coordination point for [4Fe-4S] cluster.

The protein belongs to the succinate dehydrogenase/fumarate reductase iron-sulfur protein family. As to quaternary structure, component of complex II composed of four subunits: a flavoprotein (FP), an iron-sulfur protein (IP), and a cytochrome b composed of a large and a small subunit. Requires [2Fe-2S] cluster as cofactor. [3Fe-4S] cluster serves as cofactor. [4Fe-4S] cluster is required as a cofactor.

Its subcellular location is the mitochondrion inner membrane. It catalyses the reaction a quinone + succinate = fumarate + a quinol. The protein operates within carbohydrate metabolism; tricarboxylic acid cycle; fumarate from succinate (eukaryal route): step 1/1. Functionally, iron-sulfur protein (IP) subunit of succinate dehydrogenase (SDH) that is involved in complex II of the mitochondrial electron transport chain and is responsible for transferring electrons from succinate to ubiquinone (coenzyme Q). This Schizosaccharomyces pombe (strain 972 / ATCC 24843) (Fission yeast) protein is Succinate dehydrogenase [ubiquinone] iron-sulfur subunit, mitochondrial (sdh2).